Here is a 438-residue protein sequence, read N- to C-terminus: RING finger protein 150 (438 aa).

A signal peptide spans 1–34; that stretch reads MAMSLIQACCSLALSTWLLSFCFVHLLCLDFTVA. Over 35–208 the chain is Extracellular; sequence EKEEWYTAFV…NLQKYVSRTS (174 aa). Residues Asn45, Asn125, Asn153, and Asn186 are each glycosylated (N-linked (GlcNAc...) asparagine). Positions 81–183 constitute a PA domain; the sequence is SPKQDARGEV…PKGKEIVSLL (103 aa). The chain crosses the membrane as a helical span at residues 209–229; sequence VVFVSISFIVLMIISLAWLVF. The Cytoplasmic segment spans residues 230–438; sequence YYIQRFRYAN…TDQDCEEVKS (209 aa). The RING-type; atypical zinc finger occupies 278-319; sequence CAVCIEGYKPNDVVRILPCRHLFHKSCVDPWLLDHRTCPMCK.

The protein localises to the membrane. This Homo sapiens (Human) protein is RING finger protein 150 (RNF150).